Reading from the N-terminus, the 234-residue chain is Ubiquinone biosynthesis O-methyltransferase (234 aa).

The S-adenosyl-L-methionine site is built by Arg36, Gly56, Asp77, and Met125.

This sequence belongs to the methyltransferase superfamily. UbiG/COQ3 family.

It catalyses the reaction a 3-demethylubiquinol + S-adenosyl-L-methionine = a ubiquinol + S-adenosyl-L-homocysteine + H(+). The enzyme catalyses a 3-(all-trans-polyprenyl)benzene-1,2-diol + S-adenosyl-L-methionine = a 2-methoxy-6-(all-trans-polyprenyl)phenol + S-adenosyl-L-homocysteine + H(+). Its pathway is cofactor biosynthesis; ubiquinone biosynthesis. Its function is as follows. O-methyltransferase that catalyzes the 2 O-methylation steps in the ubiquinone biosynthetic pathway. The sequence is that of Ubiquinone biosynthesis O-methyltransferase from Actinobacillus pleuropneumoniae serotype 5b (strain L20).